The sequence spans 127 residues: Ribonuclease P protein component 1 (127 aa).

Belongs to the eukaryotic/archaeal RNase P protein component 1 family. Consists of a catalytic RNA component and at least 4-5 protein subunits.

It is found in the cytoplasm. The enzyme catalyses Endonucleolytic cleavage of RNA, removing 5'-extranucleotides from tRNA precursor.. Part of ribonuclease P, a protein complex that generates mature tRNA molecules by cleaving their 5'-ends. The protein is Ribonuclease P protein component 1 of Pyrococcus abyssi (strain GE5 / Orsay).